The chain runs to 498 residues: Trehalose-6-phosphate synthase (498 aa).

Residue arginine 28 coordinates D-glucose 6-phosphate. 48–49 (GG) is a UDP-alpha-D-glucose binding site. D-glucose 6-phosphate contacts are provided by tyrosine 106 and aspartate 160. Arginine 302 and lysine 307 together coordinate UDP-alpha-D-glucose. D-glucose 6-phosphate is bound at residue arginine 340. 405-409 (LVAKE) lines the UDP-alpha-D-glucose pocket.

Belongs to the glycosyltransferase 20 family. As to quaternary structure, homotetramer.

It catalyses the reaction ADP-alpha-D-glucose + D-glucose 6-phosphate = alpha,alpha-trehalose 6-phosphate + ADP + H(+). The catalysed reaction is CDP-alpha-D-glucose + D-glucose 6-phosphate = alpha,alpha-trehalose 6-phosphate + CDP + H(+). It carries out the reaction GDP-alpha-D-glucose + D-glucose 6-phosphate = alpha,alpha-trehalose 6-phosphate + GDP + H(+). The enzyme catalyses TDP-alpha-D-glucose + D-glucose 6-phosphate = 5-methyl-UDP + alpha,alpha-trehalose 6-phosphate + H(+). It catalyses the reaction D-glucose 6-phosphate + UDP-alpha-D-glucose = alpha,alpha-trehalose 6-phosphate + UDP + H(+). It functions in the pathway glycan biosynthesis; trehalose biosynthesis. Probably involved in the osmoprotection via the biosynthesis of trehalose and in the production of glycogen and alpha-glucan via the TreS-Pep2 branch involved in the biosynthesis of maltose-1-phosphate (M1P). Catalyzes the transfer of glucose from UDP-glucose (UDP-Glc) to D-glucose 6-phosphate (Glc-6-P) to form trehalose-6-phosphate. Probably also able to use ADP-Glc, CDP-Glc, GDP-Glc and TDP-Glc as glucosyl donors. In Mycobacterium leprae (strain TN), this protein is Trehalose-6-phosphate synthase.